The following is a 73-amino-acid chain: DNA-directed RNA polymerase subunit epsilon (73 aa).

This sequence belongs to the RNA polymerase subunit epsilon family. RNAP is composed of a core of 2 alpha, a beta and a beta' subunit. The core is associated with a delta subunit, and at least one of epsilon or omega. When a sigma factor is associated with the core the holoenzyme is formed, which can initiate transcription.

It catalyses the reaction RNA(n) + a ribonucleoside 5'-triphosphate = RNA(n+1) + diphosphate. In terms of biological role, a non-essential component of RNA polymerase (RNAP). This is DNA-directed RNA polymerase subunit epsilon from Lactobacillus helveticus (strain DPC 4571).